The following is a 101-amino-acid chain: Large ribosomal subunit protein uL24 (101 aa).

The protein belongs to the universal ribosomal protein uL24 family. As to quaternary structure, part of the 50S ribosomal subunit.

Functionally, one of two assembly initiator proteins, it binds directly to the 5'-end of the 23S rRNA, where it nucleates assembly of the 50S subunit. One of the proteins that surrounds the polypeptide exit tunnel on the outside of the subunit. The polypeptide is Large ribosomal subunit protein uL24 (Streptococcus pyogenes serotype M2 (strain MGAS10270)).